We begin with the raw amino-acid sequence, 155 residues long: Phosphoprotein pp24 (155 aa).

The disordered stretch occupies residues 1–50 (MEFEAEHEGLTASWVAPAPQGGKGAEGRAGVADEAGHGKTEAECAEDGEK). The span at 34–50 (EAGHGKTEAECAEDGEK) shows a compositional bias: basic and acidic residues. A coiled-coil region spans residues 76 to 107 (RKRIEAKYMDLLVEAERENKNLRKKYNIILDV).

The protein is Phosphoprotein pp24 (MDV008) of Gallus gallus (Chicken).